The sequence spans 231 residues: Orotidine 5'-phosphate decarboxylase (231 aa).

Residues aspartate 11, lysine 32, 59–68 (DLKFHDIPNT), threonine 118, arginine 180, glutamine 189, glycine 209, and arginine 210 each bind substrate. Lysine 61 (proton donor) is an active-site residue.

This sequence belongs to the OMP decarboxylase family. Type 1 subfamily. As to quaternary structure, homodimer.

The enzyme catalyses orotidine 5'-phosphate + H(+) = UMP + CO2. Its pathway is pyrimidine metabolism; UMP biosynthesis via de novo pathway; UMP from orotate: step 2/2. Functionally, catalyzes the decarboxylation of orotidine 5'-monophosphate (OMP) to uridine 5'-monophosphate (UMP). The protein is Orotidine 5'-phosphate decarboxylase of Synechocystis sp. (strain ATCC 27184 / PCC 6803 / Kazusa).